The primary structure comprises 502 residues: Cytochrome P450 2J3 (502 aa).

Cysteine 448 contributes to the heme binding site.

It belongs to the cytochrome P450 family. Requires heme as cofactor. As to expression, abundantly expressed in heart and liver.

The protein localises to the endoplasmic reticulum membrane. Its subcellular location is the microsome membrane. It carries out the reaction an organic molecule + reduced [NADPH--hemoprotein reductase] + O2 = an alcohol + oxidized [NADPH--hemoprotein reductase] + H2O + H(+). Its function is as follows. This enzyme metabolizes arachidonic acid predominantly via a NADPH-dependent olefin epoxidation mainly to 14,15-, 11,12-, and 8,9-epoxyeicosatrienoic acids (EET). It also acts as an omega-1-hydroxylase by metabolizing arachidonic acid to 19-hydroxyeicosatetraenoic acid (19-OH-AA). The chain is Cytochrome P450 2J3 (Cyp2j3) from Rattus norvegicus (Rat).